Here is a 370-residue protein sequence, read N- to C-terminus: F-box/kelch-repeat protein At4g38940 (370 aa).

The region spanning 18-64 (PCLISLLPEEIVVDIVARVPRCYYPTLSQVSRRFRSLVASPEIYKRR) is the F-box domain. 3 Kelch repeats span residues 131–177 (NIFV…LIDR), 178–230 (KIYV…VIGG), and 263–315 (SACV…SYTG).

As to quaternary structure, part of a SCF (ASK-cullin-F-box) protein ligase complex. Interacts with SKP1A/ASK1, SKP1B/ASK2, ASK11, ASK13 and ASK18.

The protein localises to the nucleus. The protein operates within protein modification; protein ubiquitination. Functionally, component of SCF(ASK-cullin-F-box) E3 ubiquitin ligase complexes, which may mediate the ubiquitination and subsequent proteasomal degradation of target proteins. The protein is F-box/kelch-repeat protein At4g38940 of Arabidopsis thaliana (Mouse-ear cress).